The chain runs to 1098 residues: WD repeat-containing protein 72 (1098 aa).

WD repeat units follow at residues 15–54 (APPH…KISA), 60–102 (GHSA…CVEK), 158–196 (WINC…NSIQ), 315–359 (ENKN…VSKF), 399–438 (AGTA…KARL), 456–501 (GHHQ…ILHK), 504–549 (LEAG…CLLR), and 552–591 (KHLF…LERH). 2 positions are modified to phosphoserine: Ser1077 and Ser1079.

It is found in the cytoplasmic vesicle. Plays a major role in formation of tooth enamel. Specifically required during the maturation phase of amelogenesis for normal formation of the enamel matrix and clearance of enamel proteins. May be involved in localization of the calcium transporter SLC24A4 to the ameloblast cell membrane. The sequence is that of WD repeat-containing protein 72 (WDR72) from Pongo abelii (Sumatran orangutan).